The sequence spans 331 residues: Putative peptidyl-prolyl cis-trans isomerase RC0542 (331 aa).

The disordered stretch occupies residues 33–54; the sequence is EQTASNNSSTDENQTSINNEPP. The 99-residue stretch at 128-226 folds into the PPIase FKBP-type domain; that stretch reads GHVVTVFYQI…SNEVKIYDDE (99 aa).

The catalysed reaction is [protein]-peptidylproline (omega=180) = [protein]-peptidylproline (omega=0). This Rickettsia conorii (strain ATCC VR-613 / Malish 7) protein is Putative peptidyl-prolyl cis-trans isomerase RC0542.